We begin with the raw amino-acid sequence, 276 residues long: MQQQIVEEMKVKVSIDPVEEIKKRVDFIKGKLLEAHCKSLILGISGGVDSTTCGRLAQLAVNELNLETQSSDYQFIAVRLPYGIQQDEDEAQLALQFIQPTHSISINIKNGVDGLHSANHIALKDTGLLPTDSAKIDFVKGNVKARARMIAQYEVAGYVGGLVLGTDHSAENITGFYTKFGDGACDLAPLFGLNKRQVREVAAQLGAPEQLVKKVPTADLEELAPQKADEDALSVSYDQIDDFLEGKKIDADAEDRLIKIYQMSQHKRKPIPTIYD.

43–50 (GISGGVDS) contributes to the ATP binding site. Asp49 lines the Mg(2+) pocket. Arg146 contributes to the deamido-NAD(+) binding site. Thr166 lines the ATP pocket. A Mg(2+)-binding site is contributed by Glu171. Lys179 and Asp186 together coordinate deamido-NAD(+). Lys195 and Thr217 together coordinate ATP. 266–267 (HK) serves as a coordination point for deamido-NAD(+).

Belongs to the NAD synthetase family. In terms of assembly, homodimer.

The catalysed reaction is deamido-NAD(+) + NH4(+) + ATP = AMP + diphosphate + NAD(+) + H(+). The protein operates within cofactor biosynthesis; NAD(+) biosynthesis; NAD(+) from deamido-NAD(+) (ammonia route): step 1/1. In terms of biological role, catalyzes the ATP-dependent amidation of deamido-NAD to form NAD. Uses ammonia as a nitrogen source. This is NH(3)-dependent NAD(+) synthetase from Aliivibrio fischeri (strain ATCC 700601 / ES114) (Vibrio fischeri).